Reading from the N-terminus, the 694-residue chain is Elongation factor G (694 aa).

In terms of domain architecture, tr-type G spans 9–288 (SKIRNIGIMA…VIVKWLPSPK (280 aa)). GTP contacts are provided by residues 18–25 (AHIDAGKT), 82–86 (DTPGH), and 136–139 (NKMD).

The protein belongs to the TRAFAC class translation factor GTPase superfamily. Classic translation factor GTPase family. EF-G/EF-2 subfamily.

The protein localises to the cytoplasm. Catalyzes the GTP-dependent ribosomal translocation step during translation elongation. During this step, the ribosome changes from the pre-translocational (PRE) to the post-translocational (POST) state as the newly formed A-site-bound peptidyl-tRNA and P-site-bound deacylated tRNA move to the P and E sites, respectively. Catalyzes the coordinated movement of the two tRNA molecules, the mRNA and conformational changes in the ribosome. The chain is Elongation factor G from Chlamydia caviae (strain ATCC VR-813 / DSM 19441 / 03DC25 / GPIC) (Chlamydophila caviae).